A 584-amino-acid polypeptide reads, in one-letter code: Arginine--tRNA ligase (584 aa).

The 'HIGH' region motif lies at 129-139; the sequence is ANPTGPLHVGH.

It belongs to the class-I aminoacyl-tRNA synthetase family. Monomer.

The protein localises to the cytoplasm. It catalyses the reaction tRNA(Arg) + L-arginine + ATP = L-arginyl-tRNA(Arg) + AMP + diphosphate. This Halorhodospira halophila (strain DSM 244 / SL1) (Ectothiorhodospira halophila (strain DSM 244 / SL1)) protein is Arginine--tRNA ligase.